Here is a 490-residue protein sequence, read N- to C-terminus: Cardiolipin synthase 1 (490 aa).

Helical transmembrane passes span 9 to 29 (ILTILLVVGFITNVVLAFVII) and 42 to 62 (WAWLFVLFVLPVIGFILYLFL). PLD phosphodiesterase domains lie at 225 to 252 (MNNRNHRKIIIIDGQIGYIGGFNVGDDY) and 403 to 430 (QNGFIHSKILMIDDEISSIGSANMDFRS). Catalysis depends on residues histidine 230, lysine 232, aspartate 237, histidine 408, lysine 410, and aspartate 415.

The protein belongs to the phospholipase D family. Cardiolipin synthase subfamily.

Its subcellular location is the cell membrane. The catalysed reaction is 2 a 1,2-diacyl-sn-glycero-3-phospho-(1'-sn-glycerol) = a cardiolipin + glycerol. Functionally, catalyzes the reversible phosphatidyl group transfer from one phosphatidylglycerol molecule to another to form cardiolipin (CL) (diphosphatidylglycerol) and glycerol. The polypeptide is Cardiolipin synthase 1 (cls1) (Staphylococcus epidermidis (strain ATCC 35984 / DSM 28319 / BCRC 17069 / CCUG 31568 / BM 3577 / RP62A)).